The chain runs to 158 residues: Large ribosomal subunit protein uL11 (158 aa).

It belongs to the universal ribosomal protein uL11 family. Part of the ribosomal stalk of the 50S ribosomal subunit. Interacts with L10 and the large rRNA to form the base of the stalk. L10 forms an elongated spine to which L12 dimers bind in a sequential fashion forming a multimeric L10(L12)X complex.

Its function is as follows. Forms part of the ribosomal stalk which helps the ribosome interact with GTP-bound translation factors. This is Large ribosomal subunit protein uL11 from Methanoculleus marisnigri (strain ATCC 35101 / DSM 1498 / JR1).